The following is a 360-amino-acid chain: Holliday junction branch migration complex subunit RuvB (360 aa).

Residues 4–196 (HEEDLDQAEE…FGFTAHLEFY (193 aa)) are large ATPase domain (RuvB-L). ATP contacts are provided by residues leucine 35, arginine 36, glycine 77, lysine 80, threonine 81, threonine 82, 143-145 (EDF), arginine 186, tyrosine 196, and arginine 233. Residue threonine 81 coordinates Mg(2+). The small ATPAse domain (RuvB-S) stretch occupies residues 197-267 (EPDELDLIVQ…VAQDALDLYE (71 aa)). Residues 270–360 (QLGLDRLDRG…PESDPPLFED (91 aa)) are head domain (RuvB-H). Residues arginine 306, arginine 325, and arginine 330 each coordinate DNA.

The protein belongs to the RuvB family. Homohexamer. Forms an RuvA(8)-RuvB(12)-Holliday junction (HJ) complex. HJ DNA is sandwiched between 2 RuvA tetramers; dsDNA enters through RuvA and exits via RuvB. An RuvB hexamer assembles on each DNA strand where it exits the tetramer. Each RuvB hexamer is contacted by two RuvA subunits (via domain III) on 2 adjacent RuvB subunits; this complex drives branch migration. In the full resolvosome a probable DNA-RuvA(4)-RuvB(12)-RuvC(2) complex forms which resolves the HJ.

The protein resides in the cytoplasm. The enzyme catalyses ATP + H2O = ADP + phosphate + H(+). In terms of biological role, the RuvA-RuvB-RuvC complex processes Holliday junction (HJ) DNA during genetic recombination and DNA repair, while the RuvA-RuvB complex plays an important role in the rescue of blocked DNA replication forks via replication fork reversal (RFR). RuvA specifically binds to HJ cruciform DNA, conferring on it an open structure. The RuvB hexamer acts as an ATP-dependent pump, pulling dsDNA into and through the RuvAB complex. RuvB forms 2 homohexamers on either side of HJ DNA bound by 1 or 2 RuvA tetramers; 4 subunits per hexamer contact DNA at a time. Coordinated motions by a converter formed by DNA-disengaged RuvB subunits stimulates ATP hydrolysis and nucleotide exchange. Immobilization of the converter enables RuvB to convert the ATP-contained energy into a lever motion, pulling 2 nucleotides of DNA out of the RuvA tetramer per ATP hydrolyzed, thus driving DNA branch migration. The RuvB motors rotate together with the DNA substrate, which together with the progressing nucleotide cycle form the mechanistic basis for DNA recombination by continuous HJ branch migration. Branch migration allows RuvC to scan DNA until it finds its consensus sequence, where it cleaves and resolves cruciform DNA. This Nocardioides sp. (strain ATCC BAA-499 / JS614) protein is Holliday junction branch migration complex subunit RuvB.